The following is a 90-amino-acid chain: Auxin-responsive protein SAUR24 (90 aa).

Belongs to the ARG7 family.

Its subcellular location is the cell membrane. Its function is as follows. Functions as a positive effector of cell expansion through modulation of auxin transport. The protein is Auxin-responsive protein SAUR24 of Arabidopsis thaliana (Mouse-ear cress).